The chain runs to 720 residues: Denticleless protein homolog (720 aa).

WD repeat units lie at residues 43 to 85 (GMPV…TTKL), 92 to 131 (AHSNAVFDLAWVPGEHRIVTASGDQTAKVWDVRAGELLGI), and 134 to 174 (GHQC…KDGF). The DDB1-binding motif signature appears at 164–167 (WDTR). A Nuclear localization signal motif is present at residues 193 to 200 (PSKLRKKR). WD repeat units follow at residues 211–250 (DFQQSVTVVLLQDEHTLISAGAVDGVIKVWDLRKNYAAYR), 266–305 (TRKLGYSSLVLDSTGANLFANCTDDSIYMFNMTSLKTFPV), 310–351 (GHQN…LPPR), and 355–395 (GHSQ…EEEK). A DDB1-binding motif motif is present at residues 240–243 (WDLR). Disordered regions lie at residues 411–437 (KPEEQRGAGRSASPQSTPAKAFSVGSP), 476–495 (PAKLSGASPRTSPKLVPSSK), 528–552 (QSLLETSSTPKAQHSQAEKRAKRRL), and 607–698 (NEHE…TSPK). Over residues 528 to 542 (QSLLETSSTPKAQHS) the composition is skewed to polar residues. Basic and acidic residues-rich tracts occupy residues 543-552 (QAEKRAKRRL) and 642-660 (CERDSDVVDKENSSPERKN).

It belongs to the WD repeat cdt2 family. As to quaternary structure, component of the DCX(DTL) E3 ubiquitin ligase complex, at least composed of CUL4 (CUL4A or CUL4B), DDB1, DTL/CDT2 and RBX1.

Its subcellular location is the nucleus. The protein localises to the cytoplasm. The protein resides in the cytoskeleton. It is found in the microtubule organizing center. It localises to the centrosome. Its subcellular location is the chromosome. It participates in protein modification; protein ubiquitination. Its function is as follows. Substrate-specific adapter of a DCX (DDB1-CUL4-X-box) E3 ubiquitin-protein ligase complex required for cell cycle control, DNA damage response and translesion DNA synthesis. The DCX(DTL) complex, also named CRL4(CDT2) complex, mediates the polyubiquitination and subsequent degradation of CDT1, CDKN1A/p21(CIP1), KMT5A and SDE2. CDT1 degradation in response to DNA damage is necessary to ensure proper cell cycle regulation of DNA replication. CDKN1A/p21(CIP1) degradation during S phase or following UV irradiation is essential to control replication licensing. KMT5A degradation is also important for a proper regulation of mechanisms such as TGF-beta signaling, cell cycle progression, DNA repair and cell migration. Most substrates require their interaction with PCNA for their polyubiquitination: substrates interact with PCNA via their PIP-box, and those containing the 'K+4' motif in the PIP box, recruit the DCX(DTL) complex, leading to their degradation. In undamaged proliferating cells, the DCX(DTL) complex also promotes the 'Lys-164' monoubiquitination of PCNA, thereby being involved in PCNA-dependent translesion DNA synthesis. May play a role in the regulation of the circadian clock. The polypeptide is Denticleless protein homolog (DTL) (Gallus gallus (Chicken)).